Here is a 375-residue protein sequence, read N- to C-terminus: 23S rRNA (uracil(747)-C(5))-methyltransferase RlmC (375 aa).

4 residues coordinate [4Fe-4S] cluster: C3, C11, C14, and C87. S-adenosyl-L-methionine is bound by residues Q212, F241, E262, and N307. The active-site Nucleophile is C334.

The protein belongs to the class I-like SAM-binding methyltransferase superfamily. RNA M5U methyltransferase family. RlmC subfamily.

It carries out the reaction uridine(747) in 23S rRNA + S-adenosyl-L-methionine = 5-methyluridine(747) in 23S rRNA + S-adenosyl-L-homocysteine + H(+). In terms of biological role, catalyzes the formation of 5-methyl-uridine at position 747 (m5U747) in 23S rRNA. This Xenorhabdus nematophila (strain ATCC 19061 / DSM 3370 / CCUG 14189 / LMG 1036 / NCIMB 9965 / AN6) protein is 23S rRNA (uracil(747)-C(5))-methyltransferase RlmC.